The chain runs to 349 residues: DNA polymerase IV (349 aa).

The 182-residue stretch at 4–185 folds into the UmuC domain; that stretch reads IIHIDCDCFY…LPVAKLHGVG (182 aa). Mg(2+)-binding residues include aspartate 8 and aspartate 103. The active site involves glutamate 104.

It belongs to the DNA polymerase type-Y family. Monomer. It depends on Mg(2+) as a cofactor.

Its subcellular location is the cytoplasm. The catalysed reaction is DNA(n) + a 2'-deoxyribonucleoside 5'-triphosphate = DNA(n+1) + diphosphate. Its function is as follows. Poorly processive, error-prone DNA polymerase involved in untargeted mutagenesis. Copies undamaged DNA at stalled replication forks, which arise in vivo from mismatched or misaligned primer ends. These misaligned primers can be extended by PolIV. Exhibits no 3'-5' exonuclease (proofreading) activity. May be involved in translesional synthesis, in conjunction with the beta clamp from PolIII. The chain is DNA polymerase IV from Pseudomonas paraeruginosa (strain DSM 24068 / PA7) (Pseudomonas aeruginosa (strain PA7)).